The following is a 274-amino-acid chain: Large ribosomal subunit protein uL2 (274 aa).

Disordered regions lie at residues 36–61 and 223–274; these read QKSK…HKQR and VAMN…RRKR. Residues 37–46 show a composition bias toward polar residues; the sequence is KSKTGGRNSN. Basic residues-rich tracts occupy residues 50 to 61 and 254 to 274; these read TTRHRGGGHKQR and KGHK…RRKR.

This sequence belongs to the universal ribosomal protein uL2 family. As to quaternary structure, part of the 50S ribosomal subunit. Forms a bridge to the 30S subunit in the 70S ribosome.

Functionally, one of the primary rRNA binding proteins. Required for association of the 30S and 50S subunits to form the 70S ribosome, for tRNA binding and peptide bond formation. It has been suggested to have peptidyltransferase activity; this is somewhat controversial. Makes several contacts with the 16S rRNA in the 70S ribosome. This is Large ribosomal subunit protein uL2 from Halorhodospira halophila (strain DSM 244 / SL1) (Ectothiorhodospira halophila (strain DSM 244 / SL1)).